Here is a 926-residue protein sequence, read N- to C-terminus: MTARFRLPAGRTYNVRASELARDRQHTEVVCNILLLDNTVQAFRVNKHDQGQVLLDIVFKHLDLTERDYFGLQLADDSTDNPRWLDPNKPIRKQLKRGSPYNLNFRVKFFVSDPNKLQEEYTRYQYFLQIKQDILTGRLSCPCNTAALLASFAVQSELGDYNQSENLAGYLSDYSFIPNQPQDFEKEIAKLHQQHVGLSPAEAEFNYLNAARTLELYGVEFHYARDQSNNEILIGVMSGGILIYKNRVRMNTFLWLKIVKISFKCKQFFIQLRKELHESRETLLGFNMVNYRACKTLWKACVEHHTFFRLDRPLPPQKNFFAHYFTLGSKFRYCGRTEVQSVQYGKEKANKDRVFARSPSKPLARKLMDWEVVSRNSLSDDRLETQSLPSRSPPGTPNHRNSSFTQEATRVRPSSVGHLVDHVVHMSPSEDFVSQRSPSSTQANSIVLESSPSQETPEDGQPPALPPKQSKKNSWNQIHFSNSQQDLVTHTNESFDVPSSPEKSTPNGGIPHDNLVLIKMKPDENGRFGFNVKGGYDQKMPVIVSRVAPGTPADLCVPRLNEGDQVVLINGRDIAEHTHDQVVLFIKASCEKHSGELVLLVRPNAVYDVVEEKLESEPDFQYIPEKAPLDSVHQDDHSLRESMIQLAEGLITGTVLAQFDQLYRKKPGMTMSCAKLPQNISKNRYRDISPYDATRVLLKGNEDYINANYINMEIPSSSIINQYIACQGPLPHTCKDFWQMTWEQGSSMVVMLTTQVERGRVKCHQYWPEPSESSSYGCYQVTCHSEEGNPAYIFRKMTLFNQEKNESRQLTQIQYTAWPDHGVPDDSSDFLDFVCHVRDQRAGKEEPIIVHCSAGIGRTGVLITMETAMCLIECNQPVYPLDIVRTMRDQRAMMIQTPSQYRFVCEAILKVYEEGFVKPLTTSSNK.

The 284-residue stretch at 29 to 312 (VVCNILLLDN…EHHTFFRLDR (284 aa)) folds into the FERM domain. Disordered regions lie at residues 379–412 (SDDR…TRVR), 429–474 (SEDF…KKNS), and 492–511 (NESF…GGIP). Composition is skewed to polar residues over residues 398–408 (NHRNSSFTQEA) and 432–455 (FVSQ…PSQE). S474 bears the Phosphoserine mark. Residues 517-589 (LIKMKPDENG…DQVVLFIKAS (73 aa)) form the PDZ domain. Residues 655-911 (VLAQFDQLYR…RFVCEAILKV (257 aa)) enclose the Tyrosine-protein phosphatase domain. Substrate contacts are provided by residues D820, 852-858 (CSAGIGR), and Q896. C852 serves as the catalytic Phosphocysteine intermediate.

Belongs to the protein-tyrosine phosphatase family. Non-receptor class subfamily. Highly expressed in testis. Specifically expressed in spermatocytes and spermatids within seminiferous tubules (at protein level).

The protein localises to the cell membrane. The protein resides in the cytoplasm. Its subcellular location is the cytoskeleton. It catalyses the reaction O-phospho-L-tyrosyl-[protein] + H2O = L-tyrosyl-[protein] + phosphate. Its function is as follows. Phosphatase that plays a role in immunity, learning, synaptic plasticity or cell homeostasis. Regulates neuronal cell homeostasis by protecting neurons against apoptosis. Negatively regulates TLR4-induced interferon beta production by dephosphorylating adapter TICAM2 and inhibiting subsequent TRAM-TRIF interaction. Dephosphorylates also the immunoreceptor tyrosine-based activation motifs/ITAMs of the TCR zeta subunit and thereby negatively regulates TCR-mediated signaling pathway. May act at junctions between the membrane and the cytoskeleton. This is Tyrosine-protein phosphatase non-receptor type 4 (Ptpn4) from Mus musculus (Mouse).